The sequence spans 1406 residues: DNA-directed RNA polymerase subunit beta' (1406 aa).

Zn(2+)-binding residues include Cys72, Cys74, Cys87, and Cys90. Mg(2+)-binding residues include Asp462, Asp464, and Asp466. Zn(2+)-binding residues include Cys816, Cys889, Cys896, and Cys899.

This sequence belongs to the RNA polymerase beta' chain family. In terms of assembly, the RNAP catalytic core consists of 2 alpha, 1 beta, 1 beta' and 1 omega subunit. When a sigma factor is associated with the core the holoenzyme is formed, which can initiate transcription. Requires Mg(2+) as cofactor. Zn(2+) is required as a cofactor.

It catalyses the reaction RNA(n) + a ribonucleoside 5'-triphosphate = RNA(n+1) + diphosphate. DNA-dependent RNA polymerase catalyzes the transcription of DNA into RNA using the four ribonucleoside triphosphates as substrates. In Psychrobacter sp. (strain PRwf-1), this protein is DNA-directed RNA polymerase subunit beta'.